Here is a 1126-residue protein sequence, read N- to C-terminus: Translation initiation factor IF-2 (1126 aa).

The disordered stretch occupies residues 63 to 519; the sequence is LSINKPSIKK…TTRQRQKRRA (457 aa). Residues 70–83 are compositionally biased toward basic and acidic residues; sequence IKKDNFKQNKEDKS. A compositionally biased stretch (low complexity) spans 93–111; that stretch reads PLKNNSNKKPLLIKPLNKP. The segment covering 116–151 has biased composition (polar residues); sequence KISNQLQNPNKPNIVNSSQSRANLTNTNSKPSQNFN. Residues 161-171 show a composition bias toward pro residues; it reads TPPPIKSPAKP. Residues 181 to 195 are compositionally biased toward polar residues; it reads NINNNVKSSESSQNI. 2 stretches are compositionally biased toward low complexity: residues 211-224 and 240-252; these read NTNK…NNRK and IINP…NKQN. Residues 254–264 show a composition bias toward polar residues; it reads AFKQTASNRPG. Low complexity-rich tracts occupy residues 291-315 and 327-349; these read NRQG…GLRN and NRQG…NRPG. The span at 429-443 shows a compositional bias: basic and acidic residues; that stretch reads GKTDWDDSAKLEALR. The segment covering 501–517 has biased composition (basic residues); that stretch reads KQFKKKKKETTRQRQKR. The tr-type G domain maps to 618-790; the sequence is RRPPVITVMG…ILLVSDVEDL (173 aa). The interval 627-634 is G1; sequence GHVDHGKT. Position 627-634 (627-634) interacts with GTP; that stretch reads GHVDHGKT. Positions 652-656 are G2; the sequence is GITQH. The G3 stretch occupies residues 677 to 680; that stretch reads DTPG. Residues 677–681 and 731–734 contribute to the GTP site; these read DTPGH and NKID. Residues 731–734 form a G4 region; the sequence is NKID. The segment at 767–769 is G5; the sequence is SAI.

The protein belongs to the TRAFAC class translation factor GTPase superfamily. Classic translation factor GTPase family. IF-2 subfamily.

The protein resides in the cytoplasm. One of the essential components for the initiation of protein synthesis. Protects formylmethionyl-tRNA from spontaneous hydrolysis and promotes its binding to the 30S ribosomal subunits. Also involved in the hydrolysis of GTP during the formation of the 70S ribosomal complex. In Prochlorococcus marinus (strain AS9601), this protein is Translation initiation factor IF-2.